Consider the following 346-residue polypeptide: Phenylalanine--tRNA ligase alpha subunit (346 aa).

Residue Glu-260 participates in Mg(2+) binding.

The protein belongs to the class-II aminoacyl-tRNA synthetase family. Phe-tRNA synthetase alpha subunit type 1 subfamily. In terms of assembly, tetramer of two alpha and two beta subunits. Mg(2+) serves as cofactor.

It is found in the cytoplasm. The catalysed reaction is tRNA(Phe) + L-phenylalanine + ATP = L-phenylalanyl-tRNA(Phe) + AMP + diphosphate + H(+). This Herpetosiphon aurantiacus (strain ATCC 23779 / DSM 785 / 114-95) protein is Phenylalanine--tRNA ligase alpha subunit.